A 176-amino-acid polypeptide reads, in one-letter code: 4-hydroxylaminobenzoate lyase (176 aa).

Belongs to the PnbB family.

The catalysed reaction is 4-hydroxylaminobenzoate + H2O + H(+) = 3,4-dihydroxybenzoate + NH4(+). Lyase involved in the degradation of nitroaromatic compounds. Catalyzes the conversion of 4-hydroxylaminobenzoate to 3,4-dihydroxybenzoate (protocatechuate). Required for the catabolism of 4-nitrotoluene. The chain is 4-hydroxylaminobenzoate lyase from Pseudomonas putida (Arthrobacter siderocapsulatus).